The following is a 110-amino-acid chain: Parvalbumin alpha (110 aa).

Ser2 bears the N-acetylserine mark. 3 positions are modified to phosphoserine: Ser2, Ser8, and Ser24. 2 EF-hand domains span residues 39-74 (KNPD…FSSD) and 78-110 (LSAK…VAES). Residues Asp52, Asp54, Ser56, Phe58, Glu60, Glu63, Asp91, Asp93, Asp95, Lys97, and Glu102 each contribute to the Ca(2+) site.

In terms of tissue distribution, expressed in the modiolar nerve root (at protein level).

In muscle, parvalbumin is thought to be involved in relaxation after contraction. It binds two calcium ions. This chain is Parvalbumin alpha (Pvalb), found in Mus musculus (Mouse).